Consider the following 619-residue polypeptide: Dihydroxy-acid dehydratase (619 aa).

D81 is a Mg(2+) binding site. Residue C122 participates in [2Fe-2S] cluster binding. Mg(2+)-binding residues include D123 and K124. K124 carries the N6-carboxylysine modification. Residue C195 coordinates [2Fe-2S] cluster. E494 is a binding site for Mg(2+). The Proton acceptor role is filled by S520.

The protein belongs to the IlvD/Edd family. As to quaternary structure, homodimer. It depends on [2Fe-2S] cluster as a cofactor. Mg(2+) is required as a cofactor.

The enzyme catalyses (2R)-2,3-dihydroxy-3-methylbutanoate = 3-methyl-2-oxobutanoate + H2O. The catalysed reaction is (2R,3R)-2,3-dihydroxy-3-methylpentanoate = (S)-3-methyl-2-oxopentanoate + H2O. It functions in the pathway amino-acid biosynthesis; L-isoleucine biosynthesis; L-isoleucine from 2-oxobutanoate: step 3/4. It participates in amino-acid biosynthesis; L-valine biosynthesis; L-valine from pyruvate: step 3/4. Functions in the biosynthesis of branched-chain amino acids. Catalyzes the dehydration of (2R,3R)-2,3-dihydroxy-3-methylpentanoate (2,3-dihydroxy-3-methylvalerate) into 2-oxo-3-methylpentanoate (2-oxo-3-methylvalerate) and of (2R)-2,3-dihydroxy-3-methylbutanoate (2,3-dihydroxyisovalerate) into 2-oxo-3-methylbutanoate (2-oxoisovalerate), the penultimate precursor to L-isoleucine and L-valine, respectively. The polypeptide is Dihydroxy-acid dehydratase (Shewanella sp. (strain MR-7)).